Consider the following 443-residue polypeptide: Chromosomal replication initiator protein DnaA (443 aa).

A domain I, interacts with DnaA modulators region spans residues 1–73 (MYGDYRQIWE…YDAASKVTNR (73 aa)). A domain II region spans residues 73–106 (RFIEIKILSEDEEEYREIKESIERENSSESTLLS). The interval 107–323 (TLNPKYTFDT…GALIRIVAFA (217 aa)) is domain III, AAA+ region. ATP is bound by residues G151, G153, K154, and T155. The tract at residues 324–443 (TLTKSNIDLE…EELKKRIKGY (120 aa)) is domain IV, binds dsDNA.

Belongs to the DnaA family. As to quaternary structure, oligomerizes as a right-handed, spiral filament on DNA at oriC.

It localises to the cytoplasm. Plays an essential role in the initiation and regulation of chromosomal replication. ATP-DnaA binds to the origin of replication (oriC) to initiate formation of the DNA replication initiation complex once per cell cycle. Binds the DnaA box (a 9 base pair repeat at the origin) and separates the double-stranded (ds)DNA. Forms a right-handed helical filament on oriC DNA; dsDNA binds to the exterior of the filament while single-stranded (ss)DNA is stabiized in the filament's interior. The ATP-DnaA-oriC complex binds and stabilizes one strand of the AT-rich DNA unwinding element (DUE), permitting loading of DNA polymerase. After initiation quickly degrades to an ADP-DnaA complex that is not apt for DNA replication. Binds acidic phospholipids. This is Chromosomal replication initiator protein DnaA from Caldanaerobacter subterraneus subsp. tengcongensis (strain DSM 15242 / JCM 11007 / NBRC 100824 / MB4) (Thermoanaerobacter tengcongensis).